We begin with the raw amino-acid sequence, 116 residues long: DNA-binding protein Tpen_0471 (116 aa).

It belongs to the PDCD5 family.

The protein is DNA-binding protein Tpen_0471 of Thermofilum pendens (strain DSM 2475 / Hrk 5).